Here is a 242-residue protein sequence, read N- to C-terminus: Polycomb group RING finger protein 3 (242 aa).

The RING-type zinc-finger motif lies at 17 to 56 (CRLCSGYLIDATTVTECLHTFCRSCLVKYLEENNTCPTCR). The interval 115-149 (AKQHLDSHRNGETKADDSSNKEAAEEKPEEDNDYH) is disordered. Residues 117 to 140 (QHLDSHRNGETKADDSSNKEAAEE) are compositionally biased toward basic and acidic residues. Residues 132 to 242 (SSNKEAAEEK…LHYRPKMDLL (111 aa)) form an interaction with BCORL1 region.

Component of a PRC1-like complex that contains PCGF3, RNF2 and RYBP. Interacts with CBX6, CBX7 and CBX8. Interacts with BCORL1.

The protein resides in the nucleus. It localises to the nucleoplasm. Component of a Polycomb group (PcG) multiprotein PRC1-like complex, a complex class required to maintain the transcriptionally repressive state of many genes, including Hox genes, throughout development. PcG PRC1 complex acts via chromatin remodeling and modification of histones; it mediates monoubiquitination of histone H2A 'Lys-119', rendering chromatin heritably changed in its expressibility. Within the PRC1-like complex, regulates RNF2 ubiquitin ligase activity. Plays a redundant role with PCGF5 as part of a PRC1-like complex that mediates monoubiquitination of histone H2A 'Lys-119' on the X chromosome and is required for normal silencing of one copy of the X chromosome in XX females. The protein is Polycomb group RING finger protein 3 (PCGF3) of Homo sapiens (Human).